Reading from the N-terminus, the 368-residue chain is Proline-rich protein 5-like (368 aa).

At Ser28 the chain carries Phosphoserine. Positions 327–368 (PSFPPPHRQCSSEPNITDNPDGLEEGARGSQEGSELNCASLS) are disordered. Composition is skewed to polar residues over residues 335-344 (QCSSEPNITD) and 357-368 (QEGSELNCASLS).

This sequence belongs to the PROTOR family. In terms of assembly, interacts with the mammalian target of rapamycin complex 2 (mTORC2) which contains MTOR, MLST8, PRR5, RICTOR, MAPKAP1 and DEPTOR. Interacts with RFFL. Interacts (via C-terminus) with ZFP36 (via C-terminus); this interaction may accelerate ZFP36-mediated mRNA decay during stress. Interacts with RICTOR. Post-translationally, ubiquitinated. Ubiquitination by RFFL promotes proteasomal degradation of PRR5L thereby modifying the substrate-specific activity of the mTORC2 complex. Ubiquitination by RFFL is stimulated by LPA/lysophosphatidic acid.

Its function is as follows. Associates with the mTORC2 complex that regulates cellular processes including survival and organization of the cytoskeleton. Regulates the activity of the mTORC2 complex in a substrate-specific manner preventing for instance the specific phosphorylation of PKCs and thereby controlling cell migration. Plays a role in the stimulation of ZFP36-mediated mRNA decay of several ZFP36-associated mRNAs, such as TNF-alpha and GM-CSF, in response to stress. Required for ZFP36 localization to cytoplasmic stress granule (SG) and P-body (PB) in response to stress. The chain is Proline-rich protein 5-like (PRR5L) from Homo sapiens (Human).